A 249-amino-acid chain; its full sequence is Dof zinc finger protein DOF4.5 (249 aa).

A Dof-type zinc finger spans residues 25–79 (RVCARCDSDNTKFCYYNNYCEFQPRYFCKNCRRYWTHGGALRNIPIGGSSRAKRA). Residues cysteine 27, cysteine 30, cysteine 52, and cysteine 55 each contribute to the Zn(2+) site.

The protein localises to the nucleus. Its function is as follows. Transcription factor that binds specifically to a 5'-AA[AG]G-3' consensus core sequence. This chain is Dof zinc finger protein DOF4.5 (DOF4.5), found in Arabidopsis thaliana (Mouse-ear cress).